Here is a 545-residue protein sequence, read N- to C-terminus: MDFKRLTAFFAIALVIMIGWEKMFPTPKPVPAPQQAAQKQAATASAEAALAPATPITVTTDTVQAVIDEKSGDLRRLTLLKYKATGDENKPFVLFGDGKEYTYVAQSELLDAQGNNILKGIGFSAPKKQYTLNGDTVEVRLSAPETNGLKIDKVYTFTKDSYLVNVRFDIANGSGQTANLSADYRIVRDHSEPEGQGYFTHSYVGPVVYTPEGNFQKVSFSDLDDDAKSGKSEAEYIRKTPTGWLGMIEHHFMSTWILQPKGGQSVCAAGDCHIDIKRRSDKLYSASVSVPLAAIQAGAKAETAVNLYAGPQTTSVIANIADNLQLAKDYGKVHWFASPLFWLLNQLHNIIGNWGWAIVVLTIIVKAVLYPLTNASYRSMAKMRAAAPKLQTIKEKYGDDRMAQQQAMMQLYKDEKINPLGGCLPMLLQIPVFIGLYWALFASVELRQAPWLGWITDLSRADPYYILPIIMAATMFAQTYLNPPPTDPMQAKMMKIMPLVFSVMFFFFPAGLVLYWVVNNLLTIAQQWHINRSIEKQRAQGEVVS.

4 helical membrane passes run 350–370, 424–444, 461–481, and 498–518; these read IIGN…AVLY, LPML…FASV, ADPY…QTYL, and PLVF…YWVV.

This sequence belongs to the OXA1/ALB3/YidC family. Type 1 subfamily. As to quaternary structure, interacts with the Sec translocase complex via SecD. Specifically interacts with transmembrane segments of nascent integral membrane proteins during membrane integration.

It localises to the cell inner membrane. Its function is as follows. Required for the insertion and/or proper folding and/or complex formation of integral membrane proteins into the membrane. Involved in integration of membrane proteins that insert both dependently and independently of the Sec translocase complex, as well as at least some lipoproteins. Aids folding of multispanning membrane proteins. This is Membrane protein insertase YidC from Neisseria gonorrhoeae (strain NCCP11945).